The sequence spans 526 residues: NAD(P)H-quinone oxidoreductase chain 4 (526 aa).

A run of 13 helical transmembrane segments spans residues 5–25 (FPWL…VPLI), 32–52 (WYSF…FFTS), 87–107 (LILL…PVTL), 111–131 (MFHF…AVQD), 133–153 (VLFF…LAIW), 165–185 (FILY…AMYF), 211–231 (FLGL…HTWL), 239–259 (TAPV…YALI), 273–293 (FAPL…LTSF), 302–320 (IAYS…VGSL), 331–351 (QMIS…ATYD), 371–393 (IFAM…GFVA), and 414–434 (LVVL…LSML).

This sequence belongs to the complex I subunit 4 family.

It is found in the cell inner membrane. The enzyme catalyses a plastoquinone + NADH + (n+1) H(+)(in) = a plastoquinol + NAD(+) + n H(+)(out). It catalyses the reaction a plastoquinone + NADPH + (n+1) H(+)(in) = a plastoquinol + NADP(+) + n H(+)(out). NDH-1 shuttles electrons from NAD(P)H, via FMN and iron-sulfur (Fe-S) centers, to quinones in the respiratory chain. The immediate electron acceptor for the enzyme in this species is believed to be plastoquinone. Couples the redox reaction to proton translocation (for every two electrons transferred, four hydrogen ions are translocated across the cytoplasmic membrane), and thus conserves the redox energy in a proton gradient. The protein is NAD(P)H-quinone oxidoreductase chain 4 of Gloeobacter violaceus (strain ATCC 29082 / PCC 7421).